A 183-amino-acid chain; its full sequence is DELTA-miturgitoxin-Cp1b (183 aa).

Positions 1–20 (MKFSLFFSVFFLAVLHACLS) are cleaved as a signal peptide. Residues 21 to 47 (ESEIDLEDEEHFMSSDSFLSEIQDESR) constitute a propeptide that is removed on maturation. The Processing quadruplet motif signature appears at 44–47 (DESR). 8 cysteine pairs are disulfide-bonded: C51–C66, C58–C75, C65–C88, C77–C86, C115–C130, C122–C139, C129–C157, and C141–C155. The segment at 164–177 (QAIEGALRIAKKLI) is predicted alpha-helix. Residue W181 is modified to Tryptophan amide.

The protein belongs to the neurotoxin 19 (CSTX) family. Double-CSTX subfamily. Post-translationally, cleavage of the propeptide depends on the processing quadruplet motif (XXXR, with at least one of X being E). In terms of tissue distribution, expressed by the venom gland.

Its subcellular location is the secreted. It is found in the target cell membrane. Functionally, spider venom toxin that exhibits cytolytic activity by forming an alpha-helix across the membrane. Lethal to insect larvae. Causes instant paralysis and death in the larvae of the flesh fly (S.carnaria) at doses of 20 ug/g, at doses of less than 10 ug/g causes reversible paralysis. Has cytolytic activity against insect Sf9 cells. Causes stable and irreversible depolarization of fly muscle fibers, leading to contracture at higher toxin concentrations. Destabilizes membranes. The protein is DELTA-miturgitoxin-Cp1b of Cheiracanthium punctorium (Yellow sac spider).